The primary structure comprises 367 residues: uncharacterized protein (367 aa).

The FAD-binding PCMH-type domain occupies 1 to 96; that stretch reads ITLHRLAELV…LTATLQLQPV (96 aa).

It to M.tuberculosis Rv3790.

This is an uncharacterized protein from Streptomyces coelicolor.